Reading from the N-terminus, the 355-residue chain is Squamosa promoter-binding protein-like 15 (355 aa).

The tract at residues 1 to 27 (MELLKGSGLNQTESGGSSSTESSSLSG) is disordered. The span at 12–27 (TESGGSSSTESSSLSG) shows a compositional bias: low complexity. The segment at 61 to 138 (TARCQVEGCR…ACHNERRRKP (78 aa)) adopts an SBP-type zinc-finger fold. Residues Cys-64, Cys-69, Cys-86, His-89, Cys-105, Cys-108, His-112, and Cys-124 each coordinate Zn(2+). A Bipartite nuclear localization signal motif is present at residues 121 to 137 (KRSCRRRLACHNERRRK).

The protein resides in the nucleus. Probable transcription factor required for the flowering response to vernalization in the shoot apical meristem (SAM). Defines the competence of shoot meristems to flower in response to vernalization in perennials. The chain is Squamosa promoter-binding protein-like 15 from Arabis alpina (Alpine rock-cress).